Consider the following 149-residue polypeptide: Large ribosomal subunit protein bL9 (149 aa).

This sequence belongs to the bacterial ribosomal protein bL9 family.

Functionally, binds to the 23S rRNA. The polypeptide is Large ribosomal subunit protein bL9 (Actinobacillus succinogenes (strain ATCC 55618 / DSM 22257 / CCUG 43843 / 130Z)).